Consider the following 29-residue polypeptide: Cysteine-rich venom protein 25-A (29 aa).

The protein belongs to the CRISP family. Post-translationally, contains 8 disulfide bonds. In terms of tissue distribution, expressed by the venom gland.

It is found in the secreted. The polypeptide is Cysteine-rich venom protein 25-A (Naja haje haje (Egyptian cobra)).